Reading from the N-terminus, the 373-residue chain is Enoyl-[acyl-carrier-protein] reductase, mitochondrial (373 aa).

A mitochondrion-targeting transit peptide spans 1–53 (MWVCGALCRTRAPAQLGQRLLPESRRRRPASASFSASAEPSRVRALVYGHHGD). Residue Lys-61 is modified to N6-acetyllysine; alternate. Lys-61 carries the post-translational modification N6-succinyllysine; alternate. The Proton donor role is filled by Tyr-94. NADP(+) is bound by residues Asn-167, 193 to 196 (NSGV), and 216 to 218 (RDT). N6-acetyllysine; alternate is present on residues Lys-252 and Lys-267. Residues Lys-252 and Lys-267 each carry the N6-succinyllysine; alternate modification. NADP(+) is bound by residues 285 to 288 (YGGM) and 310 to 312 (FWL). Position 316 is an N6-succinyllysine (Lys-316). Residue Lys-368 participates in NADP(+) binding.

This sequence belongs to the zinc-containing alcohol dehydrogenase family. Quinone oxidoreductase subfamily. Homodimer.

The protein localises to the mitochondrion. It carries out the reaction a 2,3-saturated acyl-[ACP] + NADP(+) = a (2E)-enoyl-[ACP] + NADPH + H(+). The catalysed reaction is (2E)-butenoyl-[ACP] + NADPH + H(+) = butanoyl-[ACP] + NADP(+). It catalyses the reaction (2E)-hexenoyl-[ACP] + NADPH + H(+) = hexanoyl-[ACP] + NADP(+). The enzyme catalyses (2E)-octenoyl-[ACP] + NADPH + H(+) = octanoyl-[ACP] + NADP(+). It carries out the reaction (2E)-decenoyl-[ACP] + NADPH + H(+) = decanoyl-[ACP] + NADP(+). The catalysed reaction is (2E)-dodecenoyl-[ACP] + NADPH + H(+) = dodecanoyl-[ACP] + NADP(+). It catalyses the reaction (2E)-tetradecenoyl-[ACP] + NADPH + H(+) = tetradecanoyl-[ACP] + NADP(+). The enzyme catalyses (2E)-hexadecenoyl-[ACP] + NADPH + H(+) = hexadecanoyl-[ACP] + NADP(+). Its function is as follows. Catalyzes the NADPH-dependent reduction of trans-2-enoyl thioesters in mitochondrial fatty acid synthesis (fatty acid synthesis type II). Fatty acid chain elongation in mitochondria uses acyl carrier protein (ACP) as an acyl group carrier, but the enzyme accepts both ACP and CoA thioesters as substrates in vitro. Displays a preference for medium-chain over short- and long-chain substrates. May provide the octanoyl chain used for lipoic acid biosynthesis, regulating protein lipoylation and mitochondrial respiratory activity particularly in Purkinje cells. Involved in iron homeostasis; affecting Fe-S cluster assembly and ceramide metabolism. Required for proper morphology and bioenergetic functions of mitochondria. Required for maintenance of neurons. This chain is Enoyl-[acyl-carrier-protein] reductase, mitochondrial (MECR), found in Bos taurus (Bovine).